A 592-amino-acid polypeptide reads, in one-letter code: Aspartate--tRNA ligase (592 aa).

Glu-173 is an L-aspartate binding site. An aspartate region spans residues Gln-197–Lys-200. Arg-219 lines the L-aspartate pocket. ATP contacts are provided by residues Arg-219 to Glu-221 and Gln-228. Residue His-448 participates in L-aspartate binding. Glu-482 contacts ATP. Arg-489 lines the L-aspartate pocket. Gly-534–Arg-537 is a binding site for ATP.

It belongs to the class-II aminoacyl-tRNA synthetase family. Type 1 subfamily. In terms of assembly, homodimer.

It localises to the cytoplasm. The catalysed reaction is tRNA(Asp) + L-aspartate + ATP = L-aspartyl-tRNA(Asp) + AMP + diphosphate. In terms of biological role, catalyzes the attachment of L-aspartate to tRNA(Asp) in a two-step reaction: L-aspartate is first activated by ATP to form Asp-AMP and then transferred to the acceptor end of tRNA(Asp). The polypeptide is Aspartate--tRNA ligase (Shewanella baltica (strain OS195)).